Consider the following 297-residue polypeptide: N-acetylmuramic acid 6-phosphate etherase (297 aa).

In terms of domain architecture, SIS spans 55-218 (AAAALKAGGR…STGAMVKLGK (164 aa)). Residue Glu-83 is the Proton donor of the active site. Residue Glu-114 is part of the active site.

Belongs to the GCKR-like family. MurNAc-6-P etherase subfamily. In terms of assembly, homodimer.

The catalysed reaction is N-acetyl-D-muramate 6-phosphate + H2O = N-acetyl-D-glucosamine 6-phosphate + (R)-lactate. It participates in amino-sugar metabolism; 1,6-anhydro-N-acetylmuramate degradation. Its pathway is amino-sugar metabolism; N-acetylmuramate degradation. The protein operates within cell wall biogenesis; peptidoglycan recycling. Functionally, specifically catalyzes the cleavage of the D-lactyl ether substituent of MurNAc 6-phosphate, producing GlcNAc 6-phosphate and D-lactate. Together with AnmK, is also required for the utilization of anhydro-N-acetylmuramic acid (anhMurNAc) either imported from the medium or derived from its own cell wall murein, and thus plays a role in cell wall recycling. This chain is N-acetylmuramic acid 6-phosphate etherase, found in Serratia proteamaculans (strain 568).